A 356-amino-acid polypeptide reads, in one-letter code: Activating signal cointegrator 1 complex subunit 1 (356 aa).

Residues 1–52 (MDVLRPQIVTFDGRNYRKNPIQEKQYQHEEDEDFYPDSMEYSDEPCGAYEVA) form a required for interaction with ASCC3 region. The region spanning 57-119 (GFRATVSAPS…NGVVSARTRI (63 aa)) is the KH domain.

In terms of assembly, identified in the ASCC complex that contains ASCC1, ASCC2 and ASCC3. Interacts directly with ASCC3. The ASCC complex interacts with ALKBH3. Part of the ASC-1 complex, that contains TRIP4, ASCC1, ASCC2 and ASCC3. Interacts with CSRP1. Interacts with ZCCHC4. As to expression, expressed in the spinal cord, brain, paraspinal ganglia, thyroid, and submandibular glands.

The protein localises to the nucleus. It localises to the nucleus speckle. Its function is as follows. Plays a role in DNA damage repair as component of the ASCC complex. Part of the ASC-1 complex that enhances NF-kappa-B, SRF and AP1 transactivation. In cells responding to gastrin-activated paracrine signals, it is involved in the induction of SERPINB2 expression by gastrin. May also play a role in the development of neuromuscular junction. The sequence is that of Activating signal cointegrator 1 complex subunit 1 (Ascc1) from Mus musculus (Mouse).